A 172-amino-acid polypeptide reads, in one-letter code: C-phycocyanin-2 beta subunit (172 aa).

Asn-72 bears the N4-methylasparagine mark. (2R,3E)-phycocyanobilin-binding residues include Cys-82 and Cys-153.

The protein belongs to the phycobiliprotein family. Heterodimer of an alpha and a beta subunit, which further assembles into trimers and the trimers into hexamers. Contains two covalently linked bilin chromophores.

Its subcellular location is the cellular thylakoid membrane. In terms of biological role, light-harvesting photosynthetic bile pigment-protein from the phycobiliprotein complex (phycobilisome, PBS). Phycocyanin is the major phycobiliprotein in the PBS rod. The protein is C-phycocyanin-2 beta subunit (cpcB2) of Pseudanabaena tenuis (strain PCC 7409).